The sequence spans 354 residues: UDP-galactose transporter homolog 1 (354 aa).

5 helical membrane-spanning segments follow: residues 6 to 26 (GGSI…FLTW), 54 to 74 (LVIN…YSVV), 95 to 112 (FFKS…SSPL), 123 to 143 (LAYL…HFVL), and 148 to 168 (FPLY…IFTL). Residue asparagine 202 is glycosylated (N-linked (GlcNAc...) asparagine). The next 4 membrane-spanning stretches (helical) occupy residues 227-247 (YLMC…ALIF), 268-288 (MNIL…FIIL), 295-317 (ILIT…LFGH), and 321-340 (GLQW…EALV).

The protein belongs to the nucleotide-sugar transporter family. SLC35B subfamily.

Its subcellular location is the endoplasmic reticulum membrane. May be involved in specific transport of UDP-Gal from the cytosol to the Golgi lumen. Involved in the maintenance of optimal conditions for the folding of secretory pathway proteins in the endoplasmic reticulum. The polypeptide is UDP-galactose transporter homolog 1 (HUT1) (Debaryomyces hansenii (strain ATCC 36239 / CBS 767 / BCRC 21394 / JCM 1990 / NBRC 0083 / IGC 2968) (Yeast)).